A 693-amino-acid chain; its full sequence is MQTIKIYENKGVYKVVIGEPFPPIEFPLEQKISSNKSLSELGLTIVQQGNKVIVEKSLDLKEHIIGLGEKAFELDRKRKRYVMYNVDAGAYKKYQDPLYVSIPLFISVKDGVATGYFFNSASKVIFDVGLEEYDKVIVTIPEDSVEFYVIEGPRIEDVLEKYTELTGKPFLPPMWAFGYMISRYSYYPQDKVVELVDIMQKEGFRVAGVFLDIHYMDSYKLFTWHPYRFPEPKKLIDELHKRNVKLITIVDHGIRVDQNYSPFLSGMGKFCEIESGELFVGKMWPGTTVYPDFFREDTREWWAGLISEWLSQGVDGIWLDMNEPTDFSRAIEIRDVLSSLPVQFRDDRLVTTFPDNVVHYLRGKRVKHEKVRNAYPLYEAMATFKGFRTSHRNEIFILSRAGYAGIQRYAFIWTGDNTPSWDDLKLQLQLVLGLSISGVPFVGCDIGGFQGRNFAEIDNSMDLLVKYYALALFFPFYRSHKATDGIDTEPVFLPDYYKEKVKEIVELRYKFLPYIYSLALEASEKGHPVIRPLFYEFQDDDDMYRIEDEYMVGKYLLYAPIVSKEESRLVTLPRGKWYNYWNGEIINGKSVVKSTHELPIYLREGSIIPLEGDELIVYGETSFKRYDNAEITSSSNEIKFSREIYVSKLTITSEKPVSKIIVDDSKEIQVEKTMQNTYVAKINQKIRGKINLE.

Catalysis depends on residues aspartate 320 and glutamate 323. Residue aspartate 416 is the Proton donor of the active site.

It belongs to the glycosyl hydrolase 31 family.

Its subcellular location is the cytoplasm. It carries out the reaction Hydrolysis of terminal, non-reducing (1-&gt;4)-linked alpha-D-glucose residues with release of alpha-D-glucose.. In terms of biological role, major soluble alpha-glucosidase. This is Alpha-glucosidase (malA) from Saccharolobus solfataricus (strain ATCC 35092 / DSM 1617 / JCM 11322 / P2) (Sulfolobus solfataricus).